A 334-amino-acid polypeptide reads, in one-letter code: MADNIAITVLGAGSYGSALAVSLARNGHPTLLWGHQEDHIKRLQADRENKKFLPNIKFPELLTPEVNLKVCLAATRNILLVVPSHVFALVLQQIKPFLTPQHRIAWATKGLEAKTGRLLQEVATDILGQHYPLAVISGPTFAMEVAKGLPTAVAVAGSESKFTQDIAALFHNNRNFRTYISDDFTAVQLGGAVKNVIAIGAGLADGLGFGANARTALITRGLAELTRLGVALGAKESSFMGMAGLGDLVLTCTDNQSRNRRFGLALGQGKGINAAQIEIGQVVEGYRNTEEVYNLSHRIGIEMPICEQIYYVLYQDKAVKQAAMDLLSRSPKDE.

NADPH is bound by residues S14, Y15, H35, and K109. Residues K109, G138, and T140 each contribute to the sn-glycerol 3-phosphate site. Residue A142 participates in NADPH binding. Residues K194, D247, S257, R258, and N259 each contribute to the sn-glycerol 3-phosphate site. K194 (proton acceptor) is an active-site residue. R258 is a binding site for NADPH. Positions 282 and 284 each coordinate NADPH.

It belongs to the NAD-dependent glycerol-3-phosphate dehydrogenase family.

It localises to the cytoplasm. The enzyme catalyses sn-glycerol 3-phosphate + NAD(+) = dihydroxyacetone phosphate + NADH + H(+). It catalyses the reaction sn-glycerol 3-phosphate + NADP(+) = dihydroxyacetone phosphate + NADPH + H(+). It functions in the pathway membrane lipid metabolism; glycerophospholipid metabolism. In terms of biological role, catalyzes the reduction of the glycolytic intermediate dihydroxyacetone phosphate (DHAP) to sn-glycerol 3-phosphate (G3P), the key precursor for phospholipid synthesis. This Psychromonas ingrahamii (strain DSM 17664 / CCUG 51855 / 37) protein is Glycerol-3-phosphate dehydrogenase [NAD(P)+].